A 75-amino-acid polypeptide reads, in one-letter code: Kappa-thalatoxin-Tas2a (75 aa).

Positions 1-22 (MKFQMIAAVLLIAFCLSVVVTA) are cleaved as a signal peptide. Residues 23–40 (RMELQDDEEMKNGSFQKR) constitute a propeptide that is removed on maturation. Positions 43 to 75 (CIDTIPKSRCTAFQCKHSMKYRLSFCRKTCGTC) constitute a ShKT domain. 3 cysteine pairs are disulfide-bonded: cysteine 43–cysteine 75, cysteine 52–cysteine 68, and cysteine 57–cysteine 72.

This sequence belongs to the sea anemone type 1 potassium channel toxin family. Type 1a subfamily.

Its subcellular location is the secreted. It localises to the nematocyst. Its function is as follows. Inhibits voltage-gated potassium channels (Kv) with higher potency for Kv1.1/KCNA1 and Kv1.3/KCNA3 (IC(50)=3.4 nM). The sequence is that of Kappa-thalatoxin-Tas2a from Thalassianthus aster (Fuzzy-tipped anemone).